Reading from the N-terminus, the 489-residue chain is MDREYGSYNQRSMDSYGNQSYSVDEMGDSNFSRFGPYESYDSRSSVGGRDLYRSGYGYNDHEQGHFGDSYDGRYENPYRNSVDSFEGRSQGGSSWDPSFTRSKVRTGFMEDRGRDSYSSYGSFSSPYMKPATVGSRGRGMPAYPENAFGGRSNDAFGGPSKGRGRGRGQMPEYGGIRRPGLVGDYKQLGGAARGVARGVKRKMAPPFKPVGVFGKKQKLSKPGANQNKTVPPPAEKLSEEEEEKRRTEARREKQRRRREKNSEKYGDGMAFTCSFCKFRSFDEKGIEEHLSSTTHQEMLDHIQKQTKFDKPVMEFLHECIVNKFKKTAARRAQSLANEAAKALEKDVMEGVTPDDHMMKVETVHCSACSVYVPALHSSVQLHLKSADHSKSKLAYKEQIKRESILTATSILNNPLVKARYELYLKGENPFETQPEEQQQEQEEEEEEEEQQEQAAVPEQDLSEEQPAAIAAEPEGEDFTCDPLTTTDEV.

Disordered stretches follow at residues 1–28 (MDRE…EMGD), 62–100 (EQGH…PSFT), 133–181 (VGSR…RPGL), and 205–263 (PPFK…KNSE). The segment covering 7-22 (SYNQRSMDSYGNQSYS) has biased composition (polar residues). A compositionally biased stretch (basic and acidic residues) spans 62 to 76 (EQGHFGDSYDGRYEN). Residues 91–100 (GGSSWDPSFT) show a composition bias toward polar residues. The Bipartite nuclear localization signal signature appears at 200–221 (KRKMAPPFKPVGVFGKKQKLSK). 2 consecutive C2H2 AKAP95-type zinc fingers follow at residues 273-295 (CSFC…STTH) and 365-388 (CSAC…SADH). A disordered region spans residues 431–489 (ETQPEEQQQEQEEEEEEEEQQEQAAVPEQDLSEEQPAAIAAEPEGEDFTCDPLTTTDEV). Over residues 433-451 (QPEEQQQEQEEEEEEEEQQ) the composition is skewed to acidic residues.

Belongs to the AKAP95 family. In terms of assembly, component of the DBIRD complex.

It localises to the nucleus. Functionally, core component of the DBIRD complex, a multiprotein complex that acts at the interface between core mRNP particles and RNA polymerase II (RNAPII) and integrates transcript elongation with the regulation of alternative splicing. The polypeptide is DBIRD complex subunit ZNF326 (znf326) (Xenopus tropicalis (Western clawed frog)).